The following is a 371-amino-acid chain: Enoyl-[acyl-carrier-protein] reductase [NADH] 2, chloroplastic (371 aa).

The N-terminal 67 residues, 1–67, are a transit peptide targeting the chloroplast; the sequence is MGASVTTGLQ…SLNHKRFAVR (67 aa). NAD(+) contacts are provided by residues glycine 87, tyrosine 94, 151 to 152, 198 to 199, and leucine 248; these read DA and SL. Active-site proton acceptor residues include tyrosine 250 and tyrosine 260. NAD(+) contacts are provided by residues lysine 268 and 298-302; that span reads LGSRA.

The protein belongs to the short-chain dehydrogenases/reductases (SDR) family. FabI subfamily. In terms of assembly, homotetramer.

The protein localises to the plastid. It localises to the chloroplast. The catalysed reaction is a 2,3-saturated acyl-[ACP] + NAD(+) = a (2E)-enoyl-[ACP] + NADH + H(+). The protein operates within lipid metabolism; fatty acid biosynthesis. Catalyzes the NAD-dependent reduction of a carbon-carbon double bond in an enoyl moiety that is covalently linked to an acyl carrier protein (ACP). Catalyzes the last reduction step in the de novo synthesis cycle of fatty acids. Involved in the elongation cycle of fatty acids which are used in lipid metabolism. Required for normal plant growth. The polypeptide is Enoyl-[acyl-carrier-protein] reductase [NADH] 2, chloroplastic (Oryza sativa subsp. japonica (Rice)).